Here is a 126-residue protein sequence, read N- to C-terminus: Small nuclear ribonucleoprotein Sm D3 (126 aa).

Ser-2 is modified (N-acetylserine). One can recognise a Sm domain in the interval 5 to 77 (VPIKVLHEAE…IRFLILPDML (73 aa)). Repeat copies occupy residues 110–111 (RG), 112–113 (RG), 114–115 (RG), 116–117 (MG), and 118–119 (RG). Positions 110 to 119 (RGRGRGMGRG) are 5 X 2 AA tandem repeats of [RM]-G; required for interaction with SMN1.

This sequence belongs to the snRNP core protein family. In terms of assembly, core component of the spliceosomal U1, U2, U4 and U5 small nuclear ribonucleoproteins (snRNPs), the building blocks of the spliceosome. Most spliceosomal snRNPs contain a common set of Sm proteins, SNRPB, SNRPD1, SNRPD2, SNRPD3, SNRPE, SNRPF and SNRPG that assemble in a heptameric protein ring on the Sm site of the small nuclear RNA to form the core snRNP. Component of the U1 snRNP. The U1 snRNP is composed of the U1 snRNA and the 7 core Sm proteins SNRPB, SNRPD1, SNRPD2, SNRPD3, SNRPE, SNRPF and SNRPG, and at least three U1 snRNP-specific proteins SNRNP70/U1-70K, SNRPA/U1-A and SNRPC/U1-C. Component of the U4/U6-U5 tri-snRNP complex composed of the U4, U6 and U5 snRNAs and at least PRPF3, PRPF4, PRPF6, PRPF8, PRPF31, SNRNP200, TXNL4A, SNRNP40, SNRPB, SNRPD1, SNRPD2, SNRPD3, SNRPE, SNRPF, SNRPG, DDX23, CD2BP2, PPIH, SNU13, EFTUD2, SART1 and USP39, plus LSM2, LSM3, LSM4, LSM5, LSM6, LSM7 and LSM8. Component of the U7 snRNP complex, or U7 Sm protein core complex, that is composed of the U7 snRNA and at least LSM10, LSM11, SNRPB, SNRPD3, SNRPE, SNRPF and SNRPG; the complex does not contain SNRPD1 and SNRPD2. Component of the minor spliceosome, which splices U12-type introns. Part of the SMN-Sm complex that contains SMN1, GEMIN2/SIP1, DDX20/GEMIN3, GEMIN4, GEMIN5, GEMIN6, GEMIN7, GEMIN8, STRAP/UNRIP and the Sm proteins SNRPB, SNRPD1, SNRPD2, SNRPD3, SNRPE, SNRPF and SNRPG; catalyzes core snRNPs assembly. Forms a 6S pICln-Sm complex composed of CLNS1A/pICln, SNRPD1, SNRPD2, SNRPE, SNRPF and SNRPG; ring-like structure where CLNS1A/pICln mimics additional Sm proteins and which is unable to assemble into the core snRNP. Interacts (via C-terminus) with SMN1 (via Tudor domain); the interaction is direct. In terms of processing, methylated on arginine residues by PRMT5 and PRMT7; probable asymmetric dimethylation which is required for assembly and biogenesis of snRNPs.

It is found in the cytoplasm. It localises to the cytosol. The protein localises to the nucleus. In terms of biological role, plays a role in pre-mRNA splicing as a core component of the spliceosomal U1, U2, U4 and U5 small nuclear ribonucleoproteins (snRNPs), the building blocks of the spliceosome. Component of both the pre-catalytic spliceosome B complex and activated spliceosome C complexes. As a component of the minor spliceosome, involved in the splicing of U12-type introns in pre-mRNAs. As part of the U7 snRNP it is involved in histone pre-mRNA 3'-end processing. The protein is Small nuclear ribonucleoprotein Sm D3 (SNRPD3) of Homo sapiens (Human).